The primary structure comprises 101 residues: Small ribosomal subunit protein uS14 (101 aa).

Belongs to the universal ribosomal protein uS14 family. Part of the 30S ribosomal subunit. Contacts proteins S3 and S10.

Binds 16S rRNA, required for the assembly of 30S particles and may also be responsible for determining the conformation of the 16S rRNA at the A site. The chain is Small ribosomal subunit protein uS14 from Alkalilimnicola ehrlichii (strain ATCC BAA-1101 / DSM 17681 / MLHE-1).